The following is a 442-amino-acid chain: Cyclin-A1-2 (442 aa).

2 stretches are compositionally biased toward polar residues: residues 1 to 12 (MSSSSRNLSQEN) and 39 to 63 (ITNQKNGSRNPSPSSTLVNCSNKIG). The interval 1–72 (MSSSSRNLSQ…GQSKKAPKPA (72 aa)) is disordered.

The protein belongs to the cyclin family. Cyclin AB subfamily. In terms of assembly, interacts with CDC20-1, CDC20-2, FZR2/CCS52A1 and FZR1/CCS52A2. As to expression, expressed in roots, stems and flowers.

The protein resides in the cytoplasm. It localises to the nucleus. Involved in the regulation of male meiosis progression. This chain is Cyclin-A1-2 (CYCA1-2), found in Arabidopsis thaliana (Mouse-ear cress).